The sequence spans 393 residues: Acyl-homoserine-lactone synthase OpaM (393 aa).

Belongs to the LuxM / VanM family.

It carries out the reaction a fatty acyl-[ACP] + S-adenosyl-L-methionine = an N-acyl-L-homoserine lactone + S-methyl-5'-thioadenosine + holo-[ACP] + H(+). The polypeptide is Acyl-homoserine-lactone synthase OpaM (opaM) (Vibrio parahaemolyticus serotype O3:K6 (strain RIMD 2210633)).